Reading from the N-terminus, the 62-residue chain is Photosystem II reaction center protein Z (62 aa).

Transmembrane regions (helical) follow at residues 8–28 (AVFA…VVLA) and 41–61 (FSGA…NSLI).

The protein belongs to the PsbZ family. PSII is composed of 1 copy each of membrane proteins PsbA, PsbB, PsbC, PsbD, PsbE, PsbF, PsbH, PsbI, PsbJ, PsbK, PsbL, PsbM, PsbT, PsbY, PsbZ, Psb30/Ycf12, at least 3 peripheral proteins of the oxygen-evolving complex and a large number of cofactors. It forms dimeric complexes.

It localises to the plastid. It is found in the chloroplast thylakoid membrane. Functionally, may control the interaction of photosystem II (PSII) cores with the light-harvesting antenna, regulates electron flow through the 2 photosystem reaction centers. PSII is a light-driven water plastoquinone oxidoreductase, using light energy to abstract electrons from H(2)O, generating a proton gradient subsequently used for ATP formation. This Huperzia lucidula (Shining clubmoss) protein is Photosystem II reaction center protein Z.